Reading from the N-terminus, the 268-residue chain is MRRFSNICVILFSFLYATGHGASEEVMACLRQERSRVENPSQTIVNVVAENPAYLHCSVPPDAEHEIAWTRVSDGALLTAGNRTFTRDPRWQVSKKSANIWVLNLRRAEQQDSGCYLCEINDKHNTVYAVYLKVLEPPLPSPSSLQKKSTKLMANMSGDEVVLNCTVTSTDKDEEVLDVVWTRDGNTINFNDTEKYILKVKRDAGVVIETMRIRKATMEDDGNYACEHSQQKASQIVHINKAEAQTSNSATFPCSIFSISIFMYFLYL.

The N-terminal stretch at 1–21 is a signal peptide; that stretch reads MRRFSNICVILFSFLYATGHG. Ig-like C2-type domains lie at 40-128 and 140-251; these read PSQT…NTVY and PSPS…NSAT. Cys-57 and Cys-118 form a disulfide bridge. N-linked (GlcNAc...) asparagine glycosylation is found at Asn-82, Asn-155, Asn-164, and Asn-191. The cysteines at positions 165 and 226 are disulfide-linked.

In terms of tissue distribution, expressed in PVT neurons and pharyngeal muscles.

Its subcellular location is the secreted. Functionally, together with zig-5, required postembryonically to maintain the position of ASI and ASH head neuron cell bodies and ventral nerve cord axons of PVQ, PVP and HSN neurons by preventing their displacement that could occur during body growth and movement. May act by reducing L1CAM-like protein sax-7 (long isoform) adhesion. This chain is Zwei Ig domain protein zig-8, found in Caenorhabditis elegans.